Reading from the N-terminus, the 993-residue chain is uncharacterized protein (993 aa).

The signal sequence occupies residues 1–24 (MLLFKFNFTTAFLFTILAFAQARS). Asn-7, Asn-44, Asn-89, Asn-121, Asn-138, Asn-161, Asn-169, Asn-232, Asn-361, Asn-386, Asn-393, Asn-423, Asn-447, Asn-480, and Asn-488 each carry an N-linked (GlcNAc...) asparagine glycan. Residue Glu-504 is part of the active site. N-linked (GlcNAc...) asparagine glycosylation is found at Asn-545, Asn-548, and Asn-614. Asp-672 serves as the catalytic Proton donor. 8 N-linked (GlcNAc...) asparagine glycosylation sites follow: Asn-673, Asn-814, Asn-826, Asn-835, Asn-846, Asn-910, Asn-940, and Asn-987.

The protein belongs to the glycosyl hydrolase 31 family.

This is an uncharacterized protein from Schizosaccharomyces pombe (strain 972 / ATCC 24843) (Fission yeast).